Here is a 164-residue protein sequence, read N- to C-terminus: Galectin-3 (164 aa).

Residues 9–154 (STVDLSEPLK…FSDVLGVTVL (146 aa)) enclose the Galectin domain. 4 residues coordinate a carbohydrate: H60, R64, N73, and E84.

In terms of assembly, homotetramer. Oligomerization is required for carbohydrate binding.

The protein localises to the secreted. It is found in the extracellular space. The protein resides in the extracellular matrix. It localises to the cell wall. Binds lactose. May play a role in fruiting body formation. This Coprinopsis cinerea (strain Okayama-7 / 130 / ATCC MYA-4618 / FGSC 9003) (Inky cap fungus) protein is Galectin-3 (Cgl3).